The sequence spans 728 residues: UvrABC system protein C (728 aa).

A GIY-YIG domain is found at 16-95; it reads DSPGVYRFRD…IKEYDPRFNV (80 aa). The UVR domain maps to 208–243; sequence GTYLRRLERQMAEAAEEMEYERAARLRDDIGALKKA. Disordered regions lie at residues 473–535 and 689–728; these read ADGE…GRPK and VNTATGEIMDDDDGAPETTADAPGEPVSAGTPDERRGQER. A compositionally biased stretch (low complexity) spans 487–505; that stretch reads GDAAPNGDAAPNDGAAPDD.

The protein belongs to the UvrC family. Interacts with UvrB in an incision complex.

The protein resides in the cytoplasm. Its function is as follows. The UvrABC repair system catalyzes the recognition and processing of DNA lesions. UvrC both incises the 5' and 3' sides of the lesion. The N-terminal half is responsible for the 3' incision and the C-terminal half is responsible for the 5' incision. The protein is UvrABC system protein C of Streptomyces coelicolor (strain ATCC BAA-471 / A3(2) / M145).